Here is a 609-residue protein sequence, read N- to C-terminus: Glutamine--fructose-6-phosphate aminotransferase [isomerizing] (609 aa).

The Nucleophile; for GATase activity role is filled by Cys-2. One can recognise a Glutamine amidotransferase type-2 domain in the interval 2–217 (CGIVGYIGRR…EGWLAELTPE (216 aa)). SIS domains are found at residues 286-425 (SAAE…QNGR) and 458-599 (AAEA…VDKP). The active-site For Fru-6P isomerization activity is Lys-604.

As to quaternary structure, homodimer.

The protein localises to the cytoplasm. It carries out the reaction D-fructose 6-phosphate + L-glutamine = D-glucosamine 6-phosphate + L-glutamate. Its function is as follows. Catalyzes the first step in hexosamine metabolism, converting fructose-6P into glucosamine-6P using glutamine as a nitrogen source. The polypeptide is Glutamine--fructose-6-phosphate aminotransferase [isomerizing] (Symbiobacterium thermophilum (strain DSM 24528 / JCM 14929 / IAM 14863 / T)).